The primary structure comprises 221 residues: Transcriptional regulatory protein QseB (221 aa).

Residues 2–116 (RILLIEDDNL…EVAARLQALI (115 aa)) enclose the Response regulatory domain. A 4-aspartylphosphate modification is found at Asp-51. The ompR/PhoB-type DNA-binding region spans 124 to 218 (HSVIEQAGVK…VHGVGYALGQ (95 aa)).

Phosphorylated by QseC.

The protein resides in the cytoplasm. Its function is as follows. Member of a two-component regulatory system QseB/QseC. This chain is Transcriptional regulatory protein QseB (qseB), found in Haemophilus influenzae (strain ATCC 51907 / DSM 11121 / KW20 / Rd).